Reading from the N-terminus, the 333-residue chain is Dihydroorotate dehydrogenase (quinone) (333 aa).

FMN-binding positions include A56 to K60 and T80. Position 60 (K60) interacts with substrate. N105–F109 lines the substrate pocket. Positions 133 and 166 each coordinate FMN. N166 contacts substrate. S169 functions as the Nucleophile in the catalytic mechanism. Residue N171 coordinates substrate. The FMN site is built by K211 and T239. N240–T241 contributes to the substrate binding site. FMN contacts are provided by residues G262, G291, and Y312–S313.

This sequence belongs to the dihydroorotate dehydrogenase family. Type 2 subfamily. As to quaternary structure, monomer. FMN serves as cofactor.

The protein localises to the cell membrane. It catalyses the reaction (S)-dihydroorotate + a quinone = orotate + a quinol. Its pathway is pyrimidine metabolism; UMP biosynthesis via de novo pathway; orotate from (S)-dihydroorotate (quinone route): step 1/1. Catalyzes the conversion of dihydroorotate to orotate with quinone as electron acceptor. This chain is Dihydroorotate dehydrogenase (quinone), found in Legionella pneumophila (strain Corby).